We begin with the raw amino-acid sequence, 90 residues long: Cell division topological specificity factor (90 aa).

This sequence belongs to the MinE family.

Its function is as follows. Prevents the cell division inhibition by proteins MinC and MinD at internal division sites while permitting inhibition at polar sites. This ensures cell division at the proper site by restricting the formation of a division septum at the midpoint of the long axis of the cell. This chain is Cell division topological specificity factor, found in Clostridium perfringens (strain ATCC 13124 / DSM 756 / JCM 1290 / NCIMB 6125 / NCTC 8237 / Type A).